The following is a 119-amino-acid chain: Large ribosomal subunit protein bL20 (119 aa).

Belongs to the bacterial ribosomal protein bL20 family.

In terms of biological role, binds directly to 23S ribosomal RNA and is necessary for the in vitro assembly process of the 50S ribosomal subunit. It is not involved in the protein synthesizing functions of that subunit. This chain is Large ribosomal subunit protein bL20, found in Streptococcus gordonii (strain Challis / ATCC 35105 / BCRC 15272 / CH1 / DL1 / V288).